The primary structure comprises 156 residues: Endogenous retrovirus group K member 21 Pro protein (156 aa).

The 76-residue stretch at 21 to 96 folds into the Peptidase A2 domain; the sequence is FEGLVDTGAD…IPLNLWGRDL (76 aa). Aspartate 26 is an active-site residue. The 46-residue stretch at 111–156 folds into the G-patch domain; the sequence is YSPTSQKIMTKMGYIPGKGLGKNEDGIKVPVEAKINQKREGIGYPF.

The protein belongs to the peptidase A2 family. HERV class-II K(HML-2) subfamily. In terms of assembly, active as a homodimer. Post-translationally, autoproteolytically processed at the N-terminus. Expected C-terminal autoprocessing not detected. The sequence shown is that of the processed Pro protein.

The catalysed reaction is Processing at the authentic HIV-1 PR recognition site and release of the mature p17 matrix and the p24 capsid protein, as a result of the cleavage of the -SQNY-|-PIVQ- cleavage site.. Retroviral proteases have roles in the processing of the primary translation products and the maturation of the viral particle. Endogenous Pro proteins may have kept, lost or modified their original function during evolution. The chain is Endogenous retrovirus group K member 21 Pro protein (ERVK-21) from Homo sapiens (Human).